The sequence spans 332 residues: MAEKIYDVTIIGGGPAGMFASFYCGLHELDAQLIESLPQLGGQVGALYPEKQVWDVAGMPGVTGHDLIAKLEEQMAVAPIDQFLGETVEDVIKGDDGTFTIKSAKRVSRSRAVIIALGNGAFTPRKLALEGAAEIEGKQLSYFVNHKADYADKRVAILGGGDSAIDIALMLEPVAKEVHLVHRRDQFRGLEHTVTQLKQSSVQLDTPFLPRALTVEDDETVTLDLKKMRSDDEAQLNVDKIVVNYGFTSNNAALNQWSLDLAAEHNLIKVDSMMETSTEGVYAIGDGVTYPGKVALIAAGFGEAPTAVTALAKKLYPDKRMAMHSSSMGITK.

Residues glutamate 35, glutamine 43, tyrosine 48, valine 88, phenylalanine 122, aspartate 286, and serine 326 each coordinate FAD.

This sequence belongs to the ferredoxin--NADP reductase type 2 family. In terms of assembly, homodimer. It depends on FAD as a cofactor.

It catalyses the reaction 2 reduced [2Fe-2S]-[ferredoxin] + NADP(+) + H(+) = 2 oxidized [2Fe-2S]-[ferredoxin] + NADPH. The polypeptide is Ferredoxin--NADP reductase (Limosilactobacillus reuteri (strain DSM 20016) (Lactobacillus reuteri)).